We begin with the raw amino-acid sequence, 564 residues long: Protein NRT1/ PTR FAMILY 5.16 (564 aa).

2 helical membrane passes run Phe-49–Ser-69 and Trp-80–Gly-100. Thr-104 is subject to Phosphothreonine. The next 10 membrane-spanning stretches (helical) occupy residues Leu-110–Leu-130, Phe-145–Gly-165, Phe-192–Val-212, Trp-220–Phe-240, Ile-327–Phe-347, Ile-358–Phe-378, Ile-408–Lys-428, Ile-450–Gly-470, Ile-486–Ile-506, and Tyr-533–Ser-553.

Belongs to the major facilitator superfamily. Proton-dependent oligopeptide transporter (POT/PTR) (TC 2.A.17) family. Expressed in shoots and roots.

The protein localises to the membrane. This chain is Protein NRT1/ PTR FAMILY 5.16 (NPF5.16), found in Arabidopsis thaliana (Mouse-ear cress).